The following is a 526-amino-acid chain: GMP synthase [glutamine-hydrolyzing] (526 aa).

Positions 13-204 (TVLVVDFGAQ…LYRGAGLSPD (192 aa)) constitute a Glutamine amidotransferase type-1 domain. Cys90 functions as the Nucleophile in the catalytic mechanism. Residues His178 and Glu180 contribute to the active site. In terms of domain architecture, GMPS ATP-PPase spans 205 to 400 (WTTGNVIEEQ…LGLPDEIVQR (196 aa)). 232–238 (SGGVDSA) is an ATP binding site.

Homodimer.

The enzyme catalyses XMP + L-glutamine + ATP + H2O = GMP + L-glutamate + AMP + diphosphate + 2 H(+). It participates in purine metabolism; GMP biosynthesis; GMP from XMP (L-Gln route): step 1/1. Catalyzes the synthesis of GMP from XMP. The protein is GMP synthase [glutamine-hydrolyzing] (guaA) of Streptomyces coelicolor (strain ATCC BAA-471 / A3(2) / M145).